Here is a 174-residue protein sequence, read N- to C-terminus: MGCVVSKSDDIKNENESRQRNQASSSQQPSSSQTPSKQIGIAAKDSEEQPQEVSYSQMRELDNDFFKDIIDRTAQKFIDVSMVGPDGKDSFLDREKDYSAQIKDSKLLKPTSLTSLPRLSQQCQMSNLQNLLSQPTTFDNELMSKYTSSISENLNGIHIKECGELVVFFGNSLK.

The tract at residues 1–55 is disordered; sequence MGCVVSKSDDIKNENESRQRNQASSSQQPSSSQTPSKQIGIAAKDSEEQPQEVSY. A lipid anchor (N-myristoyl glycine) is attached at glycine 2. Over residues 7 to 19 the composition is skewed to basic and acidic residues; the sequence is KSDDIKNENESRQ. Positions 20–38 are enriched in low complexity; the sequence is RNQASSSQQPSSSQTPSKQ.

This is an uncharacterized protein from Dictyostelium discoideum (Social amoeba).